Here is a 334-residue protein sequence, read N- to C-terminus: Adenosine deaminase (334 aa).

The Zn(2+) site is built by His12 and His14. His14, Asp16, and Gly170 together coordinate substrate. A Zn(2+)-binding site is contributed by His197. Glu200 serves as the catalytic Proton donor. Residue Asp278 participates in Zn(2+) binding. Asp279 provides a ligand contact to substrate.

Belongs to the metallo-dependent hydrolases superfamily. Adenosine and AMP deaminases family. Adenosine deaminase subfamily. Zn(2+) serves as cofactor.

The enzyme catalyses adenosine + H2O + H(+) = inosine + NH4(+). It carries out the reaction 2'-deoxyadenosine + H2O + H(+) = 2'-deoxyinosine + NH4(+). In terms of biological role, catalyzes the hydrolytic deamination of adenosine and 2-deoxyadenosine. The polypeptide is Adenosine deaminase (Vibrio parahaemolyticus serotype O3:K6 (strain RIMD 2210633)).